A 218-amino-acid chain; its full sequence is Small ribosomal subunit protein uS3 (218 aa).

Residues 2-71 (SAPQRRLPVY…IGRKGAIVKE (70 aa)) enclose the KH type-2 domain.

The protein belongs to the universal ribosomal protein uS3 family. As to quaternary structure, part of the 30S ribosomal subunit.

Binds the lower part of the 30S subunit head. This chain is Small ribosomal subunit protein uS3, found in Pyrobaculum aerophilum (strain ATCC 51768 / DSM 7523 / JCM 9630 / CIP 104966 / NBRC 100827 / IM2).